The sequence spans 215 residues: Probable GTP-binding protein EngB (215 aa).

An EngB-type G domain is found at 30–204 (EGLEVAFAGR…QMVLAQWLGL (175 aa)). GTP is bound by residues 38–45 (GRSNAGKS), 64–68 (GRTQL), 82–85 (DLPG), 149–152 (TKAD), and 182–185 (LFSA). Mg(2+) is bound by residues Ser45 and Thr66.

The protein belongs to the TRAFAC class TrmE-Era-EngA-EngB-Septin-like GTPase superfamily. EngB GTPase family. It depends on Mg(2+) as a cofactor.

Functionally, necessary for normal cell division and for the maintenance of normal septation. The chain is Probable GTP-binding protein EngB from Pseudomonas paraeruginosa (strain DSM 24068 / PA7) (Pseudomonas aeruginosa (strain PA7)).